The chain runs to 277 residues: Bifunctional protein FolD 1 (277 aa).

NADP(+) is bound by residues glycine 162 to serine 164 and serine 187.

The protein belongs to the tetrahydrofolate dehydrogenase/cyclohydrolase family. Homodimer.

It carries out the reaction (6R)-5,10-methylene-5,6,7,8-tetrahydrofolate + NADP(+) = (6R)-5,10-methenyltetrahydrofolate + NADPH. The enzyme catalyses (6R)-5,10-methenyltetrahydrofolate + H2O = (6R)-10-formyltetrahydrofolate + H(+). The protein operates within one-carbon metabolism; tetrahydrofolate interconversion. Catalyzes the oxidation of 5,10-methylenetetrahydrofolate to 5,10-methenyltetrahydrofolate and then the hydrolysis of 5,10-methenyltetrahydrofolate to 10-formyltetrahydrofolate. The polypeptide is Bifunctional protein FolD 1 (Syntrophomonas wolfei subsp. wolfei (strain DSM 2245B / Goettingen)).